A 118-amino-acid polypeptide reads, in one-letter code: Thioredoxin H-type 2 (118 aa).

The region spanning A2–S113 is the Thioredoxin domain. Catalysis depends on nucleophile residues C39 and C42. Residues C39 and C42 are joined by a disulfide bond.

This sequence belongs to the thioredoxin family. Plant H-type subfamily.

The protein localises to the cytoplasm. Functionally, participates in various redox reactions through the reversible oxidation of the active center dithiol to a disulfide. The H form is known to activate a number of cytosolic enzymes. This chain is Thioredoxin H-type 2, found in Nicotiana tabacum (Common tobacco).